The sequence spans 235 residues: Large ribosomal subunit protein uL1 (235 aa).

The protein belongs to the universal ribosomal protein uL1 family. As to quaternary structure, part of the 50S ribosomal subunit.

Its function is as follows. Binds directly to 23S rRNA. The L1 stalk is quite mobile in the ribosome, and is involved in E site tRNA release. Protein L1 is also a translational repressor protein, it controls the translation of the L11 operon by binding to its mRNA. The protein is Large ribosomal subunit protein uL1 of Prochlorococcus marinus (strain MIT 9313).